A 121-amino-acid polypeptide reads, in one-letter code: Large ribosomal subunit protein bL12 (121 aa).

It belongs to the bacterial ribosomal protein bL12 family. In terms of assembly, homodimer. Part of the ribosomal stalk of the 50S ribosomal subunit. Forms a multimeric L10(L12)X complex, where L10 forms an elongated spine to which 2 to 4 L12 dimers bind in a sequential fashion. Binds GTP-bound translation factors.

Forms part of the ribosomal stalk which helps the ribosome interact with GTP-bound translation factors. Is thus essential for accurate translation. The chain is Large ribosomal subunit protein bL12 from Clostridium beijerinckii (strain ATCC 51743 / NCIMB 8052) (Clostridium acetobutylicum).